A 108-amino-acid chain; its full sequence is Thioredoxin (108 aa).

Residues 2–108 enclose the Thioredoxin domain; it reads NKIIELTDQN…LKEFLDENIN (107 aa). A disulfide bridge connects residues Cys32 and Cys35.

This sequence belongs to the thioredoxin family.

Its function is as follows. Participates in various redox reactions through the reversible oxidation of its active center dithiol to a disulfide and catalyzes dithiol-disulfide exchange reactions. This is Thioredoxin (trxA) from Buchnera aphidicola subsp. Acyrthosiphon pisum (strain APS) (Acyrthosiphon pisum symbiotic bacterium).